Here is a 341-residue protein sequence, read N- to C-terminus: UDP-3-O-acylglucosamine N-acyltransferase (341 aa).

The Proton acceptor role is filled by His240.

Belongs to the transferase hexapeptide repeat family. LpxD subfamily. As to quaternary structure, homotrimer.

It carries out the reaction a UDP-3-O-[(3R)-3-hydroxyacyl]-alpha-D-glucosamine + a (3R)-hydroxyacyl-[ACP] = a UDP-2-N,3-O-bis[(3R)-3-hydroxyacyl]-alpha-D-glucosamine + holo-[ACP] + H(+). The protein operates within bacterial outer membrane biogenesis; LPS lipid A biosynthesis. In terms of biological role, catalyzes the N-acylation of UDP-3-O-acylglucosamine using 3-hydroxyacyl-ACP as the acyl donor. Is involved in the biosynthesis of lipid A, a phosphorylated glycolipid that anchors the lipopolysaccharide to the outer membrane of the cell. This is UDP-3-O-acylglucosamine N-acyltransferase from Cellvibrio japonicus (strain Ueda107) (Pseudomonas fluorescens subsp. cellulosa).